A 261-amino-acid chain; its full sequence is Cytochrome c oxidase subunit 3 (261 aa).

Residues 1-15 (MTHQTHAYHMVNPSP) are Mitochondrial matrix-facing. A helical transmembrane segment spans residues 16-34 (WPLTGALSALLMTSGLIMW). The Mitochondrial intermembrane portion of the chain corresponds to 35-40 (FHFNST). The helical transmembrane segment at 41-66 (ALLMLGLTTNMLTMYQWWRDIIREST) threads the bilayer. The Mitochondrial matrix portion of the chain corresponds to 67–72 (FQGHHT). The helical transmembrane segment at 73-105 (PVVQKGLRYGMILFIISEVLFFTGFFWAFYHSS) threads the bilayer. The Mitochondrial intermembrane segment spans residues 106–128 (LAPTPELGGCWPPTGINPLNPLE). Residues 129–152 (VPLLNTSVLLASGVSITWAHHSLM) form a helical membrane-spanning segment. Topologically, residues 153–155 (EGN) are mitochondrial matrix. Residues 156–183 (RSHMLQALFITITLGVYFTLLQASEYYE) form a helical membrane-spanning segment. Residues 184–190 (APFTISD) are Mitochondrial intermembrane-facing. A helical membrane pass occupies residues 191-223 (GVYGSTFFVATGFHGLHVIIGSTFLIVCFFRQL). Residues 224 to 232 (KFHFTSNHH) lie on the Mitochondrial matrix side of the membrane. The helical transmembrane segment at 233-256 (FGFEAAAWYWHFVDVVWLFLYVSI) threads the bilayer. At 257–261 (YWWGS) the chain is on the mitochondrial intermembrane side.

This sequence belongs to the cytochrome c oxidase subunit 3 family. In terms of assembly, component of the cytochrome c oxidase (complex IV, CIV), a multisubunit enzyme composed of 14 subunits. The complex is composed of a catalytic core of 3 subunits MT-CO1, MT-CO2 and MT-CO3, encoded in the mitochondrial DNA, and 11 supernumerary subunits COX4I, COX5A, COX5B, COX6A, COX6B, COX6C, COX7A, COX7B, COX7C, COX8 and NDUFA4, which are encoded in the nuclear genome. The complex exists as a monomer or a dimer and forms supercomplexes (SCs) in the inner mitochondrial membrane with NADH-ubiquinone oxidoreductase (complex I, CI) and ubiquinol-cytochrome c oxidoreductase (cytochrome b-c1 complex, complex III, CIII), resulting in different assemblies (supercomplex SCI(1)III(2)IV(1) and megacomplex MCI(2)III(2)IV(2)).

It localises to the mitochondrion inner membrane. It carries out the reaction 4 Fe(II)-[cytochrome c] + O2 + 8 H(+)(in) = 4 Fe(III)-[cytochrome c] + 2 H2O + 4 H(+)(out). In terms of biological role, component of the cytochrome c oxidase, the last enzyme in the mitochondrial electron transport chain which drives oxidative phosphorylation. The respiratory chain contains 3 multisubunit complexes succinate dehydrogenase (complex II, CII), ubiquinol-cytochrome c oxidoreductase (cytochrome b-c1 complex, complex III, CIII) and cytochrome c oxidase (complex IV, CIV), that cooperate to transfer electrons derived from NADH and succinate to molecular oxygen, creating an electrochemical gradient over the inner membrane that drives transmembrane transport and the ATP synthase. Cytochrome c oxidase is the component of the respiratory chain that catalyzes the reduction of oxygen to water. Electrons originating from reduced cytochrome c in the intermembrane space (IMS) are transferred via the dinuclear copper A center (CU(A)) of subunit 2 and heme A of subunit 1 to the active site in subunit 1, a binuclear center (BNC) formed by heme A3 and copper B (CU(B)). The BNC reduces molecular oxygen to 2 water molecules using 4 electrons from cytochrome c in the IMS and 4 protons from the mitochondrial matrix. In Syncerus caffer (African buffalo), this protein is Cytochrome c oxidase subunit 3 (MT-CO3).